A 65-amino-acid chain; its full sequence is Conotoxin TsMRCL-04 (65 aa).

Residues 1–20 form the signal peptide; sequence MRCLPVFIILLLLIPSAASA. A propeptide spanning residues 21–48 is cleaved from the precursor; it reads AQPETKDDAALASFYDNAKRTLQRHWAK. Glutamic acid 1-amide is present on E63.

Belongs to the conotoxin T superfamily. Post-translationally, contains 2 disulfide bonds that can be either 'C1-C3, C2-C4' or 'C1-C4, C2-C3', since these disulfide connectivities have been observed for conotoxins with cysteine framework V (for examples, see AC P0DQQ7 and AC P81755). As to expression, expressed by the venom duct.

The protein localises to the secreted. The protein is Conotoxin TsMRCL-04 of Conus tessulatus (Tessellate cone).